We begin with the raw amino-acid sequence, 215 residues long: Flavin-dependent thymidylate synthase (215 aa).

Residues 1-215 enclose the ThyX domain; the sequence is MDVRFISLTK…FPTVAAALEW (215 aa). FAD-binding positions include Ser-56, 79–81, and Glu-87; that span reads RHR. DUMP contacts are provided by residues 76 to 79, 87 to 91, and Arg-155; these read QILR and EFSLR. Positions 79-89 match the ThyX motif motif; the sequence is RHRSFSFQEFS. Residue His-177 coordinates FAD. Residue Arg-182 participates in dUMP binding. Arg-182 functions as the Involved in ionization of N3 of dUMP, leading to its activation in the catalytic mechanism.

The protein belongs to the thymidylate synthase ThyX family. As to quaternary structure, homotetramer. FAD serves as cofactor.

The catalysed reaction is dUMP + (6R)-5,10-methylene-5,6,7,8-tetrahydrofolate + NADPH + H(+) = dTMP + (6S)-5,6,7,8-tetrahydrofolate + NADP(+). The protein operates within pyrimidine metabolism; dTTP biosynthesis. Catalyzes the reductive methylation of 2'-deoxyuridine-5'-monophosphate (dUMP) to 2'-deoxythymidine-5'-monophosphate (dTMP) while utilizing 5,10-methylenetetrahydrofolate (mTHF) as the methyl donor, and NADPH and FADH(2) as the reductant. This is Flavin-dependent thymidylate synthase from Synechocystis sp. (strain ATCC 27184 / PCC 6803 / Kazusa).